Consider the following 83-residue polypeptide: ATP synthase subunit c (83 aa).

The next 2 membrane-spanning stretches (helical) occupy residues 9–29 (LICV…GIGI) and 51–71 (MVFM…GLVI).

It belongs to the ATPase C chain family. F-type ATPases have 2 components, F(1) - the catalytic core - and F(0) - the membrane proton channel. F(1) has five subunits: alpha(3), beta(3), gamma(1), delta(1), epsilon(1). F(0) has three main subunits: a(1), b(2) and c(10-14). The alpha and beta chains form an alternating ring which encloses part of the gamma chain. F(1) is attached to F(0) by a central stalk formed by the gamma and epsilon chains, while a peripheral stalk is formed by the delta and b chains.

The protein resides in the cell inner membrane. Its function is as follows. F(1)F(0) ATP synthase produces ATP from ADP in the presence of a proton or sodium gradient. F-type ATPases consist of two structural domains, F(1) containing the extramembraneous catalytic core and F(0) containing the membrane proton channel, linked together by a central stalk and a peripheral stalk. During catalysis, ATP synthesis in the catalytic domain of F(1) is coupled via a rotary mechanism of the central stalk subunits to proton translocation. Functionally, key component of the F(0) channel; it plays a direct role in translocation across the membrane. A homomeric c-ring of between 10-14 subunits forms the central stalk rotor element with the F(1) delta and epsilon subunits. This is ATP synthase subunit c from Desulfotalea psychrophila (strain LSv54 / DSM 12343).